An 826-amino-acid chain; its full sequence is Periplasmic nitrate reductase (826 aa).

A signal peptide (tat-type signal) is located at residues 1–32 (MELNRRDFMKANAAIAAAAAAGITIPVKNVQA). The 4Fe-4S Mo/W bis-MGD-type domain maps to 37-93 (IRWDKAPCRYCGTGCSVLVGTKDGRVVATQGDPDAEVNRGLNCIKGYFLSKIMYGAD). Cys-44, Cys-47, Cys-51, and Cys-79 together coordinate [4Fe-4S] cluster. Mo-bis(molybdopterin guanine dinucleotide) is bound by residues Lys-81, Gln-148, Asn-173, Cys-177, 210 to 217 (WGSNMAEM), 241 to 245 (STYEH), 260 to 262 (QSD), Met-370, Gln-374, Asn-480, 506 to 507 (SD), Lys-529, Asp-556, and 716 to 725 (TGRVLEHWHT). Phe-792 serves as a coordination point for substrate. Mo-bis(molybdopterin guanine dinucleotide) is bound by residues Asn-800 and Lys-817.

Belongs to the prokaryotic molybdopterin-containing oxidoreductase family. NasA/NapA/NarB subfamily. Component of the periplasmic nitrate reductase NapAB complex composed of NapA and NapB. [4Fe-4S] cluster serves as cofactor. It depends on Mo-bis(molybdopterin guanine dinucleotide) as a cofactor. Predicted to be exported by the Tat system. The position of the signal peptide cleavage has not been experimentally proven.

The protein resides in the periplasm. It catalyses the reaction 2 Fe(II)-[cytochrome] + nitrate + 2 H(+) = 2 Fe(III)-[cytochrome] + nitrite + H2O. In terms of biological role, catalytic subunit of the periplasmic nitrate reductase complex NapAB. Receives electrons from NapB and catalyzes the reduction of nitrate to nitrite. In Actinobacillus succinogenes (strain ATCC 55618 / DSM 22257 / CCUG 43843 / 130Z), this protein is Periplasmic nitrate reductase.